The primary structure comprises 87 residues: U18-myrmicitoxin-Mri1a (87 aa).

The N-terminal stretch at Met-1–Pro-32 is a signal peptide. Residues Asn-33 to Gln-77 form the EGF-like domain. 3 disulfide bridges follow: Cys-37-Cys-52, Cys-46-Cys-65, and Cys-67-Cys-76.

Post-translationally, O-glycosylated. Expressed by the venom gland.

The protein localises to the secreted. This is U18-myrmicitoxin-Mri1a from Manica rubida (European giant red ant).